The primary structure comprises 190 residues: dTTP/UTP pyrophosphatase (190 aa).

Aspartate 71 functions as the Proton acceptor in the catalytic mechanism.

This sequence belongs to the Maf family. YhdE subfamily. A divalent metal cation serves as cofactor.

The protein localises to the cytoplasm. The enzyme catalyses dTTP + H2O = dTMP + diphosphate + H(+). It carries out the reaction UTP + H2O = UMP + diphosphate + H(+). Its function is as follows. Nucleoside triphosphate pyrophosphatase that hydrolyzes dTTP and UTP. May have a dual role in cell division arrest and in preventing the incorporation of modified nucleotides into cellular nucleic acids. The sequence is that of dTTP/UTP pyrophosphatase from Xanthomonas axonopodis pv. citri (strain 306).